Consider the following 101-residue polypeptide: Apolipoprotein C-II (101 aa).

Residues 1 to 22 (MGIRYLLVLVLVLLVLGCEVQG) form the signal peptide. Residues 23 to 28 (AHMPQQ) constitute a propeptide that is removed on maturation. Residues 66–74 (TMDEKIREI) form a lipid binding region. A lipoprotein lipase cofactor region spans residues 78-101 (STAAVSTYAGIFTDQLLSMLKGDQ).

It belongs to the apolipoprotein C2 family. Proapolipoprotein C-II is synthesized as a sialic acid containing glycoprotein which is subsequently desialylated prior to its proteolytic processing. Post-translationally, proapolipoprotein C-II, the major form found in plasma undergoes proteolytic cleavage of its N-terminal hexapeptide to generate apolipoprotein C-II, which occurs as the minor form in plasma.

The protein resides in the secreted. Functionally, component of chylomicrons, very low-density lipoproteins (VLDL), low-density lipoproteins (LDL), and high-density lipoproteins (HDL) in plasma. Plays an important role in lipoprotein metabolism as an activator of lipoprotein lipase. Both proapolipoprotein C-II and apolipoprotein C-II can activate lipoprotein lipase. In Neomonachus schauinslandi (Hawaiian monk seal), this protein is Apolipoprotein C-II (APOC2).